Here is a 2226-residue protein sequence, read N- to C-terminus: Rotatin (2226 aa).

The tract at residues Ala295–Asn345 is disordered. 2 stretches are compositionally biased toward low complexity: residues Pro304–Arg318 and Ala332–His343. A Phosphoserine modification is found at Ser310. Residue Lys811 is modified to N6-acetyllysine. The interval Ser1534–Pro1554 is disordered. Residues Ser1543–Pro1554 are compositionally biased toward polar residues.

It belongs to the rotatin family. In terms of assembly, interacts with PPP1R35; this interaction allows the mutual recruitment to the centriole.

It is found in the cytoplasm. It localises to the cytoskeleton. The protein localises to the cilium basal body. The protein resides in the microtubule organizing center. Its subcellular location is the centrosome. Involved in the genetic cascade that governs left-right specification. Plays a role in the maintenance of a normal ciliary structure. Required for correct asymmetric expression of NODAL, LEFTY and PITX2. This chain is Rotatin, found in Homo sapiens (Human).